Reading from the N-terminus, the 93-residue chain is Small ribosomal subunit protein uS19m (93 aa).

Belongs to the universal ribosomal protein uS19 family. As to quaternary structure, component of the mitochondrial small ribosomal subunit (mt-SSU). Mature yeast 74S mitochondrial ribosomes consist of a small (37S) and a large (54S) subunit. The 37S small subunit contains a 15S ribosomal RNA (15S mt-rRNA) and at least 32 different proteins. The 54S large subunit contains a 21S rRNA (21S mt-rRNA) and at least 45 different proteins.

Its subcellular location is the mitochondrion. Functionally, component of the mitochondrial ribosome (mitoribosome), a dedicated translation machinery responsible for the synthesis of mitochondrial genome-encoded proteins, including at least some of the essential transmembrane subunits of the mitochondrial respiratory chain. The mitoribosomes are attached to the mitochondrial inner membrane and translation products are cotranslationally integrated into the membrane. The protein is Small ribosomal subunit protein uS19m (rsm19) of Schizosaccharomyces pombe (strain 972 / ATCC 24843) (Fission yeast).